Reading from the N-terminus, the 184-residue chain is Interferon alpha-2 (184 aa).

Residues 1-23 form the signal peptide; the sequence is MALPFSLLMALVVLSCHSSCSLG. 2 cysteine pairs are disulfide-bonded: C24-C122 and C52-C162.

This sequence belongs to the alpha/beta interferon family. Interacts with IFNAR2.

The protein localises to the secreted. Produced by macrophages, IFN-alpha have antiviral activities. The polypeptide is Interferon alpha-2 (Equus caballus (Horse)).